Consider the following 119-residue polypeptide: Promotilin (119 aa).

A signal peptide spans Met-1–Ala-25. A disordered region spans residues Glu-40–Glu-72.

Belongs to the motilin family.

It localises to the secreted. In terms of biological role, plays an important role in the regulation of interdigestive gastrointestinal motility and indirectly causes rhythmic contraction of duodenal and colonic smooth muscle. The polypeptide is Promotilin (MLN) (Sus scrofa (Pig)).